A 540-amino-acid polypeptide reads, in one-letter code: MMTTPELSCDVLIIGSGAAGLSLALRLAEKHKVIVLSKGPVSEGSTFYAQGGIAAVFDETDSIASHVEDTLIAGAGICDRHAVEFVASNARTCVQWLIDQGVLFDTHVQPNGKESYHLTREGGHSHRRILHAADATGKEVETTLVSRAQNHPNIQVLERSNAVDLIISDKMGLPGPRRVVGAWIWNRNKEWVETCHAKSVVLATGGASKVYQYTTNPDISSGDGIAMAWRAGCRVANLEFNQFHPTALYHPQARNFLLTEALRGEGAYLKRPDGSRFMPDVDERGELAPRDIVARAIDHEMKQLGADCMFLDISHKPDDFVRQHFPMIYAKLLDLGMDLTKEPIPVVPAAHYTCGGVVVDDYGRTDVDGLYAIGEVSYTGLHGANRMASNSLLECLVYGWSAAMDIDRRMPSVHSVDALPAWDESRVENADERVVIQHNWHELRLLMWDYVGIVRTTKRLERALRRITMLQQEIDEYYANFRVSNNLLELRNLVQVAELIVRCAMMRKESRGLHFTLDYPQQLAESGPSILSPLTPHINR.

Residues 16-19 (SGAA), Lys38, 45-52 (STFYAQGG), and Asp223 each bind FAD. Arg290 acts as the Proton donor/acceptor in catalysis. FAD-binding positions include Glu375 and 391–392 (SL).

The protein belongs to the FAD-dependent oxidoreductase 2 family. NadB subfamily. Requires FAD as cofactor.

Its subcellular location is the cytoplasm. It carries out the reaction L-aspartate + O2 = iminosuccinate + H2O2. It functions in the pathway cofactor biosynthesis; NAD(+) biosynthesis; iminoaspartate from L-aspartate (oxidase route): step 1/1. Its function is as follows. Catalyzes the oxidation of L-aspartate to iminoaspartate, the first step in the de novo biosynthesis of NAD(+). This is L-aspartate oxidase (nadB) from Salmonella typhimurium (strain LT2 / SGSC1412 / ATCC 700720).